A 407-amino-acid polypeptide reads, in one-letter code: Acetate kinase (407 aa).

N10 is a binding site for Mg(2+). An ATP-binding site is contributed by K17. A substrate-binding site is contributed by R91. D150 (proton donor/acceptor) is an active-site residue. Residues 210 to 214 (HLGNG), 285 to 287 (DCR), and 338 to 342 (GIGEN) contribute to the ATP site. Mg(2+) is bound at residue E392.

It belongs to the acetokinase family. Homodimer. Mg(2+) serves as cofactor. The cofactor is Mn(2+).

The protein resides in the cytoplasm. The catalysed reaction is acetate + ATP = acetyl phosphate + ADP. Its pathway is metabolic intermediate biosynthesis; acetyl-CoA biosynthesis; acetyl-CoA from acetate: step 1/2. Functionally, catalyzes the formation of acetyl phosphate from acetate and ATP. Can also catalyze the reverse reaction. The polypeptide is Acetate kinase (Mannheimia succiniciproducens (strain KCTC 0769BP / MBEL55E)).